The sequence spans 466 residues: Communesin N16 acyltransferase cnsK (466 aa).

Belongs to the fumigaclavine B O-acetyltransferase family.

Its pathway is alkaloid biosynthesis. In terms of biological role, communesin N16 acyltransferase; part of the gene cluster that mediates the biosynthesis of communesins, a prominent class of indole alkaloids with great potential as pharmaceuticals. Communesins are biosynthesized by the coupling of tryptamine and aurantioclavine, two building blocks derived from L-tryptophan. The L-tryptophan decarboxylase cnsB converts L-tryptophan to tryptamine, whereas the tryptophan dimethylallyltransferase cnsF converts L-tryptophan to 4-dimethylallyl tryptophan which is further transformed to aurantioclavine by the aurantioclavine synthase cnsA, probably aided by the catalase cnsD. The cytochrome P450 monooxygenase cnsC catalyzes the heterodimeric coupling between the two different indole moieties, tryptamine and aurantioclavine, to construct vicinal quaternary stereocenters and yield the heptacyclic communesin scaffold. The O-methyltransferase cnsE then methylates the communesin scaffold to produce communesin K, the simplest characterized communesin that contains the heptacyclic core. The dioxygenase cnsJ converts communesin K into communesin I. Acylation to introduce the hexadienyl group at position N16 of communesin I by the acyltransferase cnsK leads to the production of communesin B. The hexadienyl group is produced by the highly reducing polyketide synthase cnsI, before being hydrolytically removed from cnsI by the serine hydrolase cnsH, converted into hexadienyl-CoA by the CoA ligase cnsG, and then transferred to communesin I by cnsK. Surprisingly, cnsK may also be a promiscuous acyltransferase that can tolerate a range of acyl groups, including acetyl-, propionyl-, and butyryl-CoA, which lead to communesins A, G and H respectively. The roles of the alpha-ketoglutarate-dependent dioxygenases cnsM and cnsP have still to be determined. This is Communesin N16 acyltransferase cnsK from Penicillium expansum (Blue mold rot fungus).